Reading from the N-terminus, the 403-residue chain is uncharacterized protein (403 aa).

Positions 3-126 (QVKIGQFKFG…EVIPQVLCTG (124 aa)) constitute a Bro-N domain.

This is an uncharacterized protein from Lepidoptera (butterflies and moths).